Consider the following 418-residue polypeptide: Secernin-3 (418 aa).

Residues Met-1 to Ser-5 constitute a propeptide that is removed on maturation. Cys-6 is an active-site residue. Glyoxylic acid (Cys); alternate is present on Cys-6. Cys-6 is subject to Pyruvic acid (Cys); alternate.

This sequence belongs to the peptidase C69 family. Secernin subfamily.

Plays a role in thermal nociception. This Mus musculus (Mouse) protein is Secernin-3 (Scrn3).